We begin with the raw amino-acid sequence, 562 residues long: Urease subunit alpha (562 aa).

Positions 131–562 constitute a Urease domain; that stretch reads GGMDCHIHFI…LPMAQRYFLF (432 aa). The Ni(2+) site is built by His136, His138, and Lys219. Lys219 carries the post-translational modification N6-carboxylysine. His221 contributes to the substrate binding site. The Ni(2+) site is built by His248 and His274. The active-site Proton donor is His322. Asp362 contacts Ni(2+).

It belongs to the metallo-dependent hydrolases superfamily. Urease alpha subunit family. In terms of assembly, heterotrimer of UreA (gamma), UreB (beta) and UreC (alpha) subunits. Three heterotrimers associate to form the active enzyme. The cofactor is Ni cation. Post-translationally, carboxylation allows a single lysine to coordinate two nickel ions.

Its subcellular location is the cytoplasm. It catalyses the reaction urea + 2 H2O + H(+) = hydrogencarbonate + 2 NH4(+). The protein operates within nitrogen metabolism; urea degradation; CO(2) and NH(3) from urea (urease route): step 1/1. This Paracoccus denitrificans (strain Pd 1222) protein is Urease subunit alpha.